Consider the following 598-residue polypeptide: Polypeptide N-acetylgalactosaminyltransferase 17 (598 aa).

At 1-6 (MASLRR) the chain is on the cytoplasmic side. A helical; Signal-anchor for type II membrane protein membrane pass occupies residues 7–27 (VKVLLVLNLIAVAGFVIFLAK). The Lumenal portion of the chain corresponds to 28 to 598 (CRPIAVRSGD…QRWAIKNPIK (571 aa)). A glycan (N-linked (GlcNAc...) asparagine) is linked at Asn50. Intrachain disulfides connect Cys142–Cys373 and Cys364–Cys443. A catalytic subdomain A region spans residues 151–262 (LPQISIIFIF…AGWAEPVLSR (112 aa)). Asp192 and Arg223 together coordinate substrate. Mn(2+) is bound by residues Asp246, His248, and His378. The segment at 319–381 (PIRTPAMIGC…PCSRVAHIER (63 aa)) is catalytic subdomain B. Positions 381 and 386 each coordinate substrate. Asn461 and Asn486 each carry an N-linked (GlcNAc...) asparagine glycan. The Ricin B-type lectin domain maps to 465–594 (AYGELRNNKA…SCTGQRWAIK (130 aa)). Cystine bridges form between Cys478–Cys494, Cys526–Cys541, and Cys568–Cys586.

The protein belongs to the glycosyltransferase 2 family. GalNAc-T subfamily. Mn(2+) serves as cofactor.

It is found in the golgi apparatus membrane. It catalyses the reaction L-seryl-[protein] + UDP-N-acetyl-alpha-D-galactosamine = a 3-O-[N-acetyl-alpha-D-galactosaminyl]-L-seryl-[protein] + UDP + H(+). The enzyme catalyses L-threonyl-[protein] + UDP-N-acetyl-alpha-D-galactosamine = a 3-O-[N-acetyl-alpha-D-galactosaminyl]-L-threonyl-[protein] + UDP + H(+). It functions in the pathway protein modification; protein glycosylation. May catalyze the initial reaction in O-linked oligosaccharide biosynthesis, the transfer of an N-acetyl-D-galactosamine residue to a serine or threonine residue on the protein receptor. This Mus musculus (Mouse) protein is Polypeptide N-acetylgalactosaminyltransferase 17.